The primary structure comprises 91 residues: Histone H1, sperm (91 aa).

A disordered region spans residues 1–25; the sequence is PGSPQKRAASPRKSPRKGSPKKSPM. The span at 9 to 20 shows a compositional bias: basic residues; sequence ASPRKSPRKGSP. The 74-residue stretch at 18–91 folds into the H15 domain; it reads GSPKKSPMIR…TGATGRFRVG (74 aa).

Belongs to the histone H1/H5 family.

The protein localises to the nucleus. It is found in the chromosome. Functionally, histones H1 are necessary for the condensation of nucleosome chains into higher-order structures. This Sphaerechinus granularis (Purple sea urchin) protein is Histone H1, sperm.